Reading from the N-terminus, the 953-residue chain is Serine/threonine-protein kinase ppk30 (953 aa).

Residues 57-326 (VIIQRYLSEG…IYQTLKEIME (270 aa)) form the Protein kinase domain. Residues 63 to 71 (LSEGGFSHV) and Lys-85 each bind ATP. Asp-187 acts as the Proton acceptor in catalysis. Disordered stretches follow at residues 343 to 402 (ASTY…PSVS), 427 to 451 (SPIP…RRAD), 538 to 606 (RFLP…NRMN), 641 to 669 (RKEP…NKDV), 748 to 791 (STSQ…RPIG), and 864 to 953 (RKSC…ESLE). Composition is skewed to polar residues over residues 355 to 369 (RTPS…SRPA), 378 to 402 (TVQT…PSVS), and 433 to 444 (KSYSATIQTPRS). The segment covering 547 to 557 (PSEFSSSVGSK) has biased composition (low complexity). Residues 558–575 (QNLSMDIPSVQNVSTKQK) show a composition bias toward polar residues. Over residues 656–669 (LKKDQSSEVANKDV) the composition is skewed to basic and acidic residues. A compositionally biased stretch (polar residues) spans 748–766 (STSQVSHTQRLQQSISTSL). 3 stretches are compositionally biased toward basic and acidic residues: residues 767–778 (ERVKSNTKKESN), 865–884 (KSCE…DLER), and 937–953 (PHIE…ESLE). Phosphoserine occurs at positions 872 and 875.

Belongs to the protein kinase superfamily. Ser/Thr protein kinase family.

The protein resides in the cytoplasm. The catalysed reaction is L-seryl-[protein] + ATP = O-phospho-L-seryl-[protein] + ADP + H(+). It carries out the reaction L-threonyl-[protein] + ATP = O-phospho-L-threonyl-[protein] + ADP + H(+). This is Serine/threonine-protein kinase ppk30 (ppk30) from Schizosaccharomyces pombe (strain 972 / ATCC 24843) (Fission yeast).